The sequence spans 387 residues: Galactokinase (387 aa).

Residue 33–36 participates in substrate binding; sequence EHID. ATP is bound by residues S67 and 124-130; that span reads GAGLSSS. The Mg(2+) site is built by S130 and E162. D174 (proton acceptor) is an active-site residue. Residue Y224 participates in substrate binding.

Belongs to the GHMP kinase family. GalK subfamily.

It localises to the cytoplasm. It carries out the reaction alpha-D-galactose + ATP = alpha-D-galactose 1-phosphate + ADP + H(+). The protein operates within carbohydrate metabolism; galactose metabolism. In terms of biological role, catalyzes the transfer of the gamma-phosphate of ATP to D-galactose to form alpha-D-galactose-1-phosphate (Gal-1-P). The sequence is that of Galactokinase from Clostridium perfringens (strain 13 / Type A).